Consider the following 270-residue polypeptide: Phosphatidylinositol transfer protein alpha isoform (270 aa).

Positions 58, 60, 85, 89, 96, and 194 each coordinate a 1,2-diacyl-sn-glycero-3-phospho-(1D-myo-inositol). Residue K215 is modified to N6-acetyllysine.

Belongs to the PtdIns transfer protein family. PI transfer class I subfamily. Phosphorylated by PKC in a calcium and phosphatidylserine-dependent manner.

The protein resides in the cytoplasm. The protein localises to the nucleus. It catalyses the reaction a 1,2-diacyl-sn-glycero-3-phosphocholine(in) = a 1,2-diacyl-sn-glycero-3-phosphocholine(out). It carries out the reaction a 1,2-diacyl-sn-glycero-3-phospho-(1D-myo-inositol)(in) = a 1,2-diacyl-sn-glycero-3-phospho-(1D-myo-inositol)(out). Its function is as follows. Catalyzes the transfer of phosphatidylinositol (PI) and phosphatidylcholine (PC) between membranes. Shows a preference for PI and PC containing shorter saturated or monosaturated acyl chains at the sn-1 and sn-2 positions. Preference order for PC is C16:1 &gt; C16:0 &gt; C18:1 &gt; C18:0 &gt; C20:4 and for PI is C16:1 &gt; C16:0 &gt; C18:1 &gt; C18:0 &gt; C20:4 &gt; C20:3. The polypeptide is Phosphatidylinositol transfer protein alpha isoform (PITPNA) (Bos taurus (Bovine)).